Consider the following 262-residue polypeptide: tRNA pseudouridine synthase A (262 aa).

Asp55 functions as the Nucleophile in the catalytic mechanism. Tyr116 contributes to the substrate binding site.

Belongs to the tRNA pseudouridine synthase TruA family. Homodimer.

It carries out the reaction uridine(38/39/40) in tRNA = pseudouridine(38/39/40) in tRNA. Formation of pseudouridine at positions 38, 39 and 40 in the anticodon stem and loop of transfer RNAs. In Bdellovibrio bacteriovorus (strain ATCC 15356 / DSM 50701 / NCIMB 9529 / HD100), this protein is tRNA pseudouridine synthase A.